The primary structure comprises 432 residues: Glutamate-1-semialdehyde 2,1-aminomutase 1 (432 aa).

Lys272 carries the post-translational modification N6-(pyridoxal phosphate)lysine.

Belongs to the class-III pyridoxal-phosphate-dependent aminotransferase family. HemL subfamily. In terms of assembly, homodimer. The cofactor is pyridoxal 5'-phosphate.

Its subcellular location is the cytoplasm. The enzyme catalyses (S)-4-amino-5-oxopentanoate = 5-aminolevulinate. The protein operates within porphyrin-containing compound metabolism; protoporphyrin-IX biosynthesis; 5-aminolevulinate from L-glutamyl-tRNA(Glu): step 2/2. This is Glutamate-1-semialdehyde 2,1-aminomutase 1 from Exiguobacterium sibiricum (strain DSM 17290 / CCUG 55495 / CIP 109462 / JCM 13490 / 255-15).